Reading from the N-terminus, the 284-residue chain is D-tagatose-1,6-bisphosphate aldolase subunit GatY (284 aa).

D82 serves as the catalytic Proton donor. Zn(2+) is bound by residues H83 and H180. G181 contacts dihydroxyacetone phosphate. H208 is a Zn(2+) binding site. Residues 209 to 211 (GAS) and 230 to 233 (NVAT) each bind dihydroxyacetone phosphate.

This sequence belongs to the class II fructose-bisphosphate aldolase family. TagBP aldolase GatY subfamily. As to quaternary structure, forms a complex with GatZ. Zn(2+) serves as cofactor.

It carries out the reaction D-tagatofuranose 1,6-bisphosphate = D-glyceraldehyde 3-phosphate + dihydroxyacetone phosphate. The protein operates within carbohydrate metabolism; D-tagatose 6-phosphate degradation; D-glyceraldehyde 3-phosphate and glycerone phosphate from D-tagatose 6-phosphate: step 2/2. Functionally, catalytic subunit of the tagatose-1,6-bisphosphate aldolase GatYZ, which catalyzes the reversible aldol condensation of dihydroxyacetone phosphate (DHAP or glycerone-phosphate) with glyceraldehyde 3-phosphate (G3P) to produce tagatose 1,6-bisphosphate (TBP). Requires GatZ subunit for full activity and stability. Is involved in the catabolism of galactitol. This is D-tagatose-1,6-bisphosphate aldolase subunit GatY from Escherichia coli O6:H1 (strain CFT073 / ATCC 700928 / UPEC).